The sequence spans 106 residues: UPF0145 protein VCM66_A0911 (106 aa).

It belongs to the UPF0145 family.

The polypeptide is UPF0145 protein VCM66_A0911 (Vibrio cholerae serotype O1 (strain M66-2)).